The chain runs to 291 residues: Potassium-transporting ATPase subunit beta (291 aa).

Residues 1 to 36 (MAALQEKKTCGQRMEEFQRYCWNPDTGQMLGRTLSR) are Cytoplasmic-facing. The helical; Signal-anchor for type II membrane protein transmembrane segment at 37–57 (WVWISLYYVAFYVVMTGLFAL) threads the bilayer. The Extracellular portion of the chain corresponds to 58–291 (CLYVLMQTVD…KVEFKLKIEK (234 aa)). Residues Asn-99, Asn-103, Asn-130, Asn-146, and Asn-161 are each glycosylated (N-linked (GlcNAc...) asparagine). Cys-131 and Cys-152 form a disulfide bridge. Cys-162 and Cys-178 are joined by a disulfide. Asn-193 and Asn-222 each carry an N-linked (GlcNAc...) asparagine glycan. Residues 194-291 (GSAPRVDCAF…KVEFKLKIEK (98 aa)) form an immunoglobulin-like region. Cys-201 and Cys-263 form a disulfide bridge.

The protein belongs to the X(+)/potassium ATPases subunit beta family. The ATPase pump is composed of two subunits: alpha (catalytic) and beta (regulatory). Interacts with alpha subunit ATP12A; this interaction is required for the formation of a functionally active pump and targeting at the plasma membrane. Interacts (via N-terminus) with alpha subunit ATP4A (via the P-domain). N-glycosylation is necessary for assembly and functional expression of the pump at the plasma membrane.

The protein localises to the apical cell membrane. It localises to the cell membrane. In terms of biological role, the beta subunit of the gastric H(+)/K(+) ATPase pump which transports H(+) ions in exchange for K(+) ions across the apical membrane of parietal cells. Plays a structural and regulatory role in the assembly and membrane targeting of a functionally active pump. Within a transport cycle, the transfer of a H(+) ion across the membrane is coupled to ATP hydrolysis and is associated with a transient phosphorylation of the alpha subunit that shifts the pump conformation from inward-facing (E1) to outward-facing state (E2). Interacts with the phosphorylation domain of the alpha subunit and functions as a ratchet, stabilizing the lumenal-open E2 conformation and preventing the reverse reaction of the transport cycle. In Homo sapiens (Human), this protein is Potassium-transporting ATPase subunit beta.